A 196-amino-acid chain; its full sequence is Carnitine operon protein CaiE (196 aa).

Residues 173–196 are disordered; it reads TQPLRQMEENRPRLQGTTDVTPKR. The span at 187–196 shows a compositional bias: polar residues; sequence QGTTDVTPKR.

This sequence belongs to the transferase hexapeptide repeat family.

It functions in the pathway amine and polyamine metabolism; carnitine metabolism. In terms of biological role, overproduction of CaiE stimulates the activity of CaiB and CaiD. The chain is Carnitine operon protein CaiE from Escherichia coli O127:H6 (strain E2348/69 / EPEC).